A 334-amino-acid polypeptide reads, in one-letter code: Transaldolase (334 aa).

Residue S2 is modified to N-acetylserine. Residue K143 is the Schiff-base intermediate with substrate of the active site.

The protein belongs to the transaldolase family. Type 1 subfamily. As to quaternary structure, homodimer.

It carries out the reaction D-sedoheptulose 7-phosphate + D-glyceraldehyde 3-phosphate = D-erythrose 4-phosphate + beta-D-fructose 6-phosphate. It participates in carbohydrate degradation; pentose phosphate pathway; D-glyceraldehyde 3-phosphate and beta-D-fructose 6-phosphate from D-ribose 5-phosphate and D-xylulose 5-phosphate (non-oxidative stage): step 2/3. Its function is as follows. Transaldolase is important for the balance of metabolites in the pentose-phosphate pathway. The sequence is that of Transaldolase (TAL1) from Kluyveromyces lactis (strain ATCC 8585 / CBS 2359 / DSM 70799 / NBRC 1267 / NRRL Y-1140 / WM37) (Yeast).